A 435-amino-acid polypeptide reads, in one-letter code: IAA-amino acid hydrolase ILR1-like 5 (435 aa).

The first 25 residues, 1 to 25 (MSFCKLVSFVLILHLLNSCLISCSS), serve as a signal peptide directing secretion. The Mn(2+) site is built by Cys-134, His-136, Glu-170, His-194, and His-397. Residues 432 to 435 (KDEL) carry the Prevents secretion from ER motif.

Belongs to the peptidase M20 family.

It is found in the endoplasmic reticulum lumen. Hydrolyzes certain amino acid conjugates of the plant growth regulator indole-3-acetic acid (IAA). This Arabidopsis thaliana (Mouse-ear cress) protein is IAA-amino acid hydrolase ILR1-like 5.